The following is a 324-amino-acid chain: Methenyltetrahydromethanopterin cyclohydrolase (324 aa).

The protein belongs to the MCH family.

It localises to the cytoplasm. It catalyses the reaction 5,10-methenyl-5,6,7,8-tetrahydromethanopterin + H2O = N(5)-formyl-5,6,7,8-tetrahydromethanopterin + H(+). Its pathway is one-carbon metabolism; formaldehyde degradation; formate from formaldehyde (H(4)MPT route): step 3/5. Functionally, catalyzes the hydrolysis of methenyl-H(4)MPT(+) to 5-formyl-H(4)MPT. The polypeptide is Methenyltetrahydromethanopterin cyclohydrolase (Methylobacterium nodulans (strain LMG 21967 / CNCM I-2342 / ORS 2060)).